Reading from the N-terminus, the 144-residue chain is UPF0306 protein ESA_03544 (144 aa).

The protein belongs to the UPF0306 family.

The polypeptide is UPF0306 protein ESA_03544 (Cronobacter sakazakii (strain ATCC BAA-894) (Enterobacter sakazakii)).